The primary structure comprises 447 residues: Adenylosuccinate synthetase (447 aa).

GTP contacts are provided by residues G12–K18 and G40–T42. D13 functions as the Proton acceptor in the catalytic mechanism. Mg(2+)-binding residues include D13 and G40. IMP is bound by residues D13–K16, N38–H41, T128, R142, Q223, T238, and R302. H41 functions as the Proton donor in the catalytic mechanism. Residue T298–R304 coordinates substrate. Residues R304, K330–D332, and S412–G414 contribute to the GTP site.

Belongs to the adenylosuccinate synthetase family. In terms of assembly, homodimer. The cofactor is Mg(2+).

The protein localises to the cytoplasm. The enzyme catalyses IMP + L-aspartate + GTP = N(6)-(1,2-dicarboxyethyl)-AMP + GDP + phosphate + 2 H(+). It functions in the pathway purine metabolism; AMP biosynthesis via de novo pathway; AMP from IMP: step 1/2. In terms of biological role, plays an important role in the de novo pathway of purine nucleotide biosynthesis. Catalyzes the first committed step in the biosynthesis of AMP from IMP. The sequence is that of Adenylosuccinate synthetase from Nostoc sp. (strain PCC 7120 / SAG 25.82 / UTEX 2576).